The following is a 373-amino-acid chain: Pectin lyase D (373 aa).

The signal sequence occupies residues 1-19; that stretch reads MKYAAALTAIAALAARAAA. Disulfide bonds link cysteine 82–cysteine 101 and cysteine 91–cysteine 225. Asparagine 128 carries N-linked (GlcNAc...) asparagine glycosylation. Arginine 255 is a catalytic residue. Asparagine 274 carries N-linked (GlcNAc...) asparagine glycosylation. Cysteine 321 and cysteine 329 are disulfide-bonded. The N-linked (GlcNAc...) asparagine glycan is linked to asparagine 348. Over residues 354–366 the composition is skewed to low complexity; that stretch reads LPSADAASTSPAS. The tract at residues 354-373 is disordered; sequence LPSADAASTSPASNAGQGNL.

It belongs to the polysaccharide lyase 1 family. In terms of processing, may be O-glycosylated; does not contain N-acetylglucosamine.

It is found in the secreted. It catalyses the reaction Eliminative cleavage of (1-&gt;4)-alpha-D-galacturonan methyl ester to give oligosaccharides with 4-deoxy-6-O-methyl-alpha-D-galact-4-enuronosyl groups at their non-reducing ends.. Its function is as follows. Pectinolytic enzymes consist of four classes of enzymes: pectin lyase, polygalacturonase, pectin methylesterase and rhamnogalacturonase. Among pectinolytic enzymes, pectin lyase is the most important in depolymerization of pectin, since it cleaves internal glycosidic bonds of highly methylated pectins. This chain is Pectin lyase D (pelD), found in Aspergillus niger.